A 141-amino-acid chain; its full sequence is Putative pre-16S rRNA nuclease (141 aa).

Belongs to the YqgF nuclease family.

It localises to the cytoplasm. Could be a nuclease involved in processing of the 5'-end of pre-16S rRNA. This is Putative pre-16S rRNA nuclease from Sodalis glossinidius (strain morsitans).